The primary structure comprises 145 residues: Large ribosomal subunit protein uL13 (145 aa).

It belongs to the universal ribosomal protein uL13 family. Part of the 50S ribosomal subunit.

Its function is as follows. This protein is one of the early assembly proteins of the 50S ribosomal subunit, although it is not seen to bind rRNA by itself. It is important during the early stages of 50S assembly. This chain is Large ribosomal subunit protein uL13, found in Geobacillus kaustophilus (strain HTA426).